The following is a 204-amino-acid chain: Thymidylate kinase (204 aa).

Residue 11–18 participates in ATP binding; the sequence is GLDKSGKT.

The protein belongs to the thymidylate kinase family.

It catalyses the reaction dTMP + ATP = dTDP + ADP. It participates in pyrimidine metabolism; dTTP biosynthesis. In Ectromelia virus (strain Moscow) (ECTV), this protein is Thymidylate kinase (TMK).